The following is a 530-amino-acid chain: Sugar transport protein MST6 (530 aa).

The Cytoplasmic portion of the chain corresponds to 1 to 18 (MAGGVVVNNGGGKDYPGK). Residues 19 to 39 (LTMFVLFACIVAATGGLIFGY) traverse the membrane as a helical segment. The Extracellular segment spans residues 40–81 (DIGISGGVTSMNPFLIKFFPSVYRKEQAAEKNQSNQYCKFDS). A helical transmembrane segment spans residues 82–102 (PLLTMFTSSLYLAALVASFFA). Topologically, residues 103-119 (STVTRVAGRKWSMFGGG) are cytoplasmic. Residues 120 to 140 (VTFLVGAALNGAAKNVLMLIL) traverse the membrane as a helical segment. Residues 141–142 (GR) are Extracellular-facing. A helical membrane pass occupies residues 143–163 (VLLGVGVGFANQSVPLYLSEM). Residues 164–169 (APARLR) are Cytoplasmic-facing. A helical transmembrane segment spans residues 170–190 (GMLNIGFQLMITIGILCANLI). Topologically, residues 191 to 204 (NYGTAKIKGGWGWR) are extracellular. A helical membrane pass occupies residues 205–225 (VSLALAAVPAAIIAVGALFLP). At 226–291 (DTPNSLIDRG…YRPQLTMAIA (66 aa)) the chain is on the cytoplasmic side. The helical transmembrane segment at 292–312 (IPLFQQLTGINVIMFYAPVLF) threads the bilayer. At 313-323 (KTLGFADDASL) the chain is on the extracellular side. The helical transmembrane segment at 324-344 (MSAVITGLVNVFATFVSIVTV) threads the bilayer. The Cytoplasmic portion of the chain corresponds to 345-359 (DRLGRRKLFLQGGTQ). The helical transmembrane segment at 360 to 380 (MLACQIVVGSLIGAKFGFSGV) threads the bilayer. The Extracellular segment spans residues 381-388 (ADIPKAYA). The chain crosses the membrane as a helical span at residues 389-409 (AFVVLFICAYVAGFAWSWGPL). Topologically, residues 410 to 428 (GWLVPSEIFPLEIRSAGQS) are cytoplasmic. A helical membrane pass occupies residues 429–449 (INVSVNMLFTFIIAQAFLPML). At 450–453 (CRFK) the chain is on the extracellular side. A helical transmembrane segment spans residues 454–474 (FILFFFFGAWVVIMTLFVAFF). At 475 to 530 (LPETKNVPIEEMVLVWKSHWYWGRFIRDEDVHVGADVEMPAAGNRNGKVDPAKLAN) the chain is on the cytoplasmic side.

The protein belongs to the major facilitator superfamily. Sugar transporter (TC 2.A.1.1) family. As to expression, expressed in leaf blades, leaf sheaths, anthers, ovaries and embryos. Expressed at low levels in roots and shoots.

It localises to the cell membrane. Mediates active uptake of hexoses by sugar:proton symport. Can transport glucose, fructose, mannose, galactose, xylose and ribose. This is Sugar transport protein MST6 from Oryza sativa subsp. japonica (Rice).